The sequence spans 824 residues: Dapper 1 (824 aa).

Disordered stretches follow at residues 1–34, 61–80, 131–150, 454–487, and 516–536; these read MKPIPATPDHLGQHQESPRRKDKGEAESERQRTR, ALTPGAPTHGDTATRAGDTP, EEHLETDSRPSSGFYELSDG, TSNVQKENVTPNAPTNLSNASSSACNGSPRESTQ, and ASSSFDERPPLDFKSEGSSSQ. Residues 2–343 form an interaction with tcf7l1 region; it reads KPIPATPDHL…PVRTNKPRTS (342 aa). Basic and acidic residues predominate over residues 11 to 34; sequence LGQHQESPRRKDKGEAESERQRTR. Residues 19–47 adopt a coiled-coil conformation; it reads RRKDKGEAESERQRTRERLEATLAGLAEL. Residues 520–530 are compositionally biased toward basic and acidic residues; sequence FDERPPLDFKS. A PDZ-binding motif is present at residues 821-824; that stretch reads MTTV.

Belongs to the dapper family. As to quaternary structure, interacts with dbf4, dvl2 and tcf7l1.

Its subcellular location is the cytoplasm. The protein resides in the nucleus. Its function is as follows. Involved in regulation of intracellular signaling pathways during development. Specifically thought to play a role in canonical and/or non-canonical Wnt signaling pathways through interaction with DSH (Dishevelled) family proteins. Binds to dvl2 and regulates the degradation of ctnnb1/beta-catenin, thereby modulating the transcriptional activation of target genes of the Wnt signaling pathway. May also bind to and directly stimulate the activity of tcf7l1. The chain is Dapper 1 (dact1) from Xenopus tropicalis (Western clawed frog).